The following is a 91-amino-acid chain: UPF0250 protein NGK_1021 (91 aa).

The protein belongs to the UPF0250 family.

This chain is UPF0250 protein NGK_1021, found in Neisseria gonorrhoeae (strain NCCP11945).